Reading from the N-terminus, the 106-residue chain is MNRIYACPVADVPEGEALRIDTSPVIALFNVGGEFYAINDRCSHGNASMSEGYLEDDATVECPLHAASFCLKTGKALCLPATDPLTTYPVHVEGGDIFIDLPEAQP.

The region spanning 4 to 99 is the Rieske domain; the sequence is IYACPVADVP…VHVEGGDIFI (96 aa). Cysteine 42, histidine 44, cysteine 62, and histidine 65 together coordinate [2Fe-2S] cluster.

Belongs to the bacterial ring-hydroxylating dioxygenase ferredoxin component family. In terms of assembly, this dioxygenase system consists of four proteins: the two subunits of the hydroxylase component (HcaE and HcaF), a ferredoxin (HcaC) and a ferredoxin reductase (HcaD). The cofactor is [2Fe-2S] cluster.

Its pathway is aromatic compound metabolism; 3-phenylpropanoate degradation. Functionally, part of the multicomponent 3-phenylpropionate dioxygenase, that converts 3-phenylpropionic acid (PP) and cinnamic acid (CI) into 3-phenylpropionate-dihydrodiol (PP-dihydrodiol) and cinnamic acid-dihydrodiol (CI-dihydrodiol), respectively. This protein seems to be a 2Fe-2S ferredoxin. This Escherichia coli O139:H28 (strain E24377A / ETEC) protein is 3-phenylpropionate/cinnamic acid dioxygenase ferredoxin subunit.